The following is a 563-amino-acid chain: Probable trehalase (563 aa).

Residues R154, 161–162, N198, 207–209, 274–276, and G307 each bind substrate; these read WD, RSQ, and RPE. Active-site proton donor/acceptor residues include D309 and E517. E532 contributes to the substrate binding site.

Belongs to the glycosyl hydrolase 37 family.

It catalyses the reaction alpha,alpha-trehalose + H2O = alpha-D-glucose + beta-D-glucose. In terms of biological role, involved in the regulation of trehalose content by hydrolyzing trehalose to glucose. The sequence is that of Probable trehalase from Oryza sativa subsp. japonica (Rice).